The following is a 155-amino-acid chain: Deoxyuridine 5'-triphosphate nucleotidohydrolase (155 aa).

Residues 74-76, Asn87, and 91-93 each bind substrate; these read RSG and LID.

The protein belongs to the dUTPase family. It depends on Mg(2+) as a cofactor.

The enzyme catalyses dUTP + H2O = dUMP + diphosphate + H(+). It functions in the pathway pyrimidine metabolism; dUMP biosynthesis; dUMP from dCTP (dUTP route): step 2/2. Functionally, this enzyme is involved in nucleotide metabolism: it produces dUMP, the immediate precursor of thymidine nucleotides and it decreases the intracellular concentration of dUTP so that uracil cannot be incorporated into DNA. In Xylella fastidiosa (strain M23), this protein is Deoxyuridine 5'-triphosphate nucleotidohydrolase.